The primary structure comprises 582 residues: MAVRPRIQLLDTVTINQIAAGEVIENAVSVVKELVENALDAGADEIEVETLGGGQGLIVVKDNGCGMSSDEVTLALKRHATSKIEEFSDVFSLSSFGFRGEALPAIASISKMEILSCPKGEEGSRTIIHGGEVIAAEAKPRQLGTTISVDSLFYNVPVRRGFQKSPQTNRIAMRKLLENRILSLESVGWSWISERQQEFHILKHQGLAERVAFVMGEGFMQEALRVDRVEEPIRIVGFLGSPCFHRPTRLGQRIFINDRPVDSPLISKQISEAYTMLLPPQRYPVFVLKLYLPPQWCDFNVHPQKTEVRILKEEFVREFLSESIGEVLARSQESSSYKKTSLTLPTLRFFDGQLPEISLEQPRESMSLPVTQLATPSIRSISSLGCQQEIPAVDTQTEIVWGESQEVRFLTSLGKIVLAEDSEGVHAIFTEAARKHLFYLSLIENQQEHYKSQSFLVPLCLEVTPQERVFLLSHIEEFKQLGIEISQIGPCVFAIESAPTFIGEEELKSWILSLAAESHTKVDKKAIALLIKESLTQTIFGKTLRTFDISWLSLLWQIGKPEKAFDGTLIRRLILDEDFIKE.

It belongs to the DNA mismatch repair MutL/HexB family.

In terms of biological role, this protein is involved in the repair of mismatches in DNA. It is required for dam-dependent methyl-directed DNA mismatch repair. May act as a 'molecular matchmaker', a protein that promotes the formation of a stable complex between two or more DNA-binding proteins in an ATP-dependent manner without itself being part of a final effector complex. The polypeptide is DNA mismatch repair protein MutL (Chlamydia abortus (strain DSM 27085 / S26/3) (Chlamydophila abortus)).